A 239-amino-acid chain; its full sequence is Phosphoribosylaminoimidazole-succinocarboxamide synthase (239 aa).

Belongs to the SAICAR synthetase family.

It catalyses the reaction 5-amino-1-(5-phospho-D-ribosyl)imidazole-4-carboxylate + L-aspartate + ATP = (2S)-2-[5-amino-1-(5-phospho-beta-D-ribosyl)imidazole-4-carboxamido]succinate + ADP + phosphate + 2 H(+). The protein operates within purine metabolism; IMP biosynthesis via de novo pathway; 5-amino-1-(5-phospho-D-ribosyl)imidazole-4-carboxamide from 5-amino-1-(5-phospho-D-ribosyl)imidazole-4-carboxylate: step 1/2. The sequence is that of Phosphoribosylaminoimidazole-succinocarboxamide synthase from Bacillus cytotoxicus (strain DSM 22905 / CIP 110041 / 391-98 / NVH 391-98).